Consider the following 247-residue polypeptide: Mannose-P-dolichol utilization defect 1 protein (247 aa).

The residue at position 2 (Ala-2) is an N-acetylalanine. 7 consecutive transmembrane segments (helical) span residues 37–57 (CLKILLSKGLGLGIVAGSLLV), 74–94 (LSLQSVMLELVALTGTMVYSI), 100–120 (FSSWGEALFLMLQTITICFLV), 128–145 (VKGVAFLACYGLVLLVLL), 151–171 (LTVVTLLQASNVPAVVVGRLL), 185–205 (LSAITVFLLFGGSLARIFTSI), and 213–233 (MAGTFVVSSLCNGLIAAQLLF). The 67-residue stretch at 39 to 105 (KILLSKGLGL…NNFPFSSWGE (67 aa)) folds into the PQ-loop 1 domain. Residues 159-216 (ASNVPAVVVGRLLQAATNYHNGHTGQLSAITVFLLFGGSLARIFTSIQETGDPLMAGT) form the PQ-loop 2 domain.

It belongs to the MPDU1 (TC 2.A.43.3) family.

Its subcellular location is the membrane. In terms of biological role, required for normal utilization of mannose-dolichol phosphate (Dol-P-Man) in the synthesis of N-linked and O-linked oligosaccharides and GPI anchors. This chain is Mannose-P-dolichol utilization defect 1 protein (MPDU1), found in Homo sapiens (Human).